The chain runs to 566 residues: Rho GTPase-activating protein gacH (566 aa).

Disordered regions lie at residues 1–56, 65–84, 128–168, and 322–366; these read MSGV…SGAT, LLKQQQQPNHSITTNNNNNK, SEDE…SAHS, and KPQV…NSKN. Positions 14–35 are enriched in low complexity; that stretch reads SSTTATTTGSSKSSLNISKSVS. A compositionally biased stretch (polar residues) spans 36–56; the sequence is PTGNKAVSPMSSPNSLQSGAT. Over residues 65 to 83 the composition is skewed to low complexity; the sequence is LLKQQQQPNHSITTNNNNN. The segment covering 130 to 141 has biased composition (acidic residues); it reads DEYEDDEDEDEN. Over residues 142-160 the composition is skewed to low complexity; sequence NNSVNNNSNNNSNNNNNNN. The segment covering 327–337 has biased composition (polar residues); the sequence is KSPQSSGSLST. Over residues 345 to 356 the composition is skewed to low complexity; the sequence is SSSLQRSRSVSQ. The Rho-GAP domain maps to 369 to 564; it reads GSLDTILEKE…LLIENYNLFY (196 aa).

The protein localises to the cytoplasm. In terms of biological role, rho GTPase-activating protein involved in the signal transduction pathway. The protein is Rho GTPase-activating protein gacH (gacH) of Dictyostelium discoideum (Social amoeba).